Here is a 342-residue protein sequence, read N- to C-terminus: MTNILSPEKSEHDQELPIRPSYLKEFVGQQQIKENLLVFIKAAKSRNEHLDHTLFYGPPGLGKTTLAKIISNEIGGNFKSTAGPAIIKAADLASILTNLEKNDVLFIDEIHRLNTLVEEVLYSAMEDFELDIIIGEGSAARPVKITLPKFTLIGATTRFGLISNPLRDRFGIPMRLNFYNTEELKQVLNRASKLLDIDLTDSGSEEIAKRSRGTPRIALRLLRRIRDFAVVDGKSRIDKEICDFGLKRLTVDSIGLDSNDYRYLKFIADNYHGGPVGIETIAAALSEQRDELEETIEPYLIKIGLVKRTPRGRVITIAAFEHLKMPIPNKSQNQLNILNENE.

Residues 1 to 179 (MTNILSPEKS…FGIPMRLNFY (179 aa)) are large ATPase domain (RuvB-L). ATP contacts are provided by residues I18, R19, G60, K63, T64, T65, 126 to 128 (EDF), R169, Y179, and R216. Residue T64 coordinates Mg(2+). The small ATPAse domain (RuvB-S) stretch occupies residues 180-250 (NTEELKQVLN…ICDFGLKRLT (71 aa)). Residues 253–342 (SIGLDSNDYR…NQLNILNENE (90 aa)) are head domain (RuvB-H). The DNA site is built by R289, R308, and R313.

This sequence belongs to the RuvB family. Homohexamer. Forms an RuvA(8)-RuvB(12)-Holliday junction (HJ) complex. HJ DNA is sandwiched between 2 RuvA tetramers; dsDNA enters through RuvA and exits via RuvB. An RuvB hexamer assembles on each DNA strand where it exits the tetramer. Each RuvB hexamer is contacted by two RuvA subunits (via domain III) on 2 adjacent RuvB subunits; this complex drives branch migration. In the full resolvosome a probable DNA-RuvA(4)-RuvB(12)-RuvC(2) complex forms which resolves the HJ.

It localises to the cytoplasm. The enzyme catalyses ATP + H2O = ADP + phosphate + H(+). Participates in UV-tolerance of Synechocystis PCC 6803. Functionally, the RuvA-RuvB-RuvC complex processes Holliday junction (HJ) DNA during genetic recombination and DNA repair, while the RuvA-RuvB complex plays an important role in the rescue of blocked DNA replication forks via replication fork reversal (RFR). RuvA specifically binds to HJ cruciform DNA, conferring on it an open structure. The RuvB hexamer acts as an ATP-dependent pump, pulling dsDNA into and through the RuvAB complex. RuvB forms 2 homohexamers on either side of HJ DNA bound by 1 or 2 RuvA tetramers; 4 subunits per hexamer contact DNA at a time. Coordinated motions by a converter formed by DNA-disengaged RuvB subunits stimulates ATP hydrolysis and nucleotide exchange. Immobilization of the converter enables RuvB to convert the ATP-contained energy into a lever motion, pulling 2 nucleotides of DNA out of the RuvA tetramer per ATP hydrolyzed, thus driving DNA branch migration. The RuvB motors rotate together with the DNA substrate, which together with the progressing nucleotide cycle form the mechanistic basis for DNA recombination by continuous HJ branch migration. Branch migration allows RuvC to scan DNA until it finds its consensus sequence, where it cleaves and resolves cruciform DNA. The sequence is that of Holliday junction branch migration complex subunit RuvB from Rickettsia prowazekii (strain Madrid E).